Consider the following 99-residue polypeptide: Small ribosomal subunit protein eS24 (99 aa).

This sequence belongs to the eukaryotic ribosomal protein eS24 family.

The polypeptide is Small ribosomal subunit protein eS24 (Pyrococcus horikoshii (strain ATCC 700860 / DSM 12428 / JCM 9974 / NBRC 100139 / OT-3)).